Reading from the N-terminus, the 93-residue chain is Probable endoribonuclease MazF1 (93 aa).

Belongs to the PemK/MazF family. In terms of assembly, forms a complex with cognate antitoxin MazE1.

Its function is as follows. Toxic component of a type II toxin-antitoxin (TA) system, its cognate antitoxin is MazE1. Probably an endoribonuclease. The sequence is that of Probable endoribonuclease MazF1 (mazF1) from Mycobacterium tuberculosis (strain ATCC 25618 / H37Rv).